We begin with the raw amino-acid sequence, 488 residues long: 3-octaprenyl-4-hydroxybenzoate carboxy-lyase (488 aa).

Asparagine 172 is a binding site for Mn(2+). Residues 175–177 (IYR), 189–191 (RWL), and 194–195 (RG) each bind prenylated FMN. Glutamate 238 lines the Mn(2+) pocket. Aspartate 287 serves as the catalytic Proton donor.

The protein belongs to the UbiD family. Homohexamer. Prenylated FMN serves as cofactor. Requires Mn(2+) as cofactor.

Its subcellular location is the cell membrane. It carries out the reaction a 4-hydroxy-3-(all-trans-polyprenyl)benzoate + H(+) = a 2-(all-trans-polyprenyl)phenol + CO2. Its pathway is cofactor biosynthesis; ubiquinone biosynthesis. Functionally, catalyzes the decarboxylation of 3-octaprenyl-4-hydroxy benzoate to 2-octaprenylphenol, an intermediate step in ubiquinone biosynthesis. The sequence is that of 3-octaprenyl-4-hydroxybenzoate carboxy-lyase from Pseudoalteromonas translucida (strain TAC 125).